A 219-amino-acid chain; its full sequence is ER lumen protein-retaining receptor (219 aa).

Residues 1–5 (MNPFR) lie on the Lumenal side of the membrane. A helical membrane pass occupies residues 6–26 (ILGDLSHLTSILILIHNIKTT). Residues 27-37 (RYIEGISFKTQ) are Cytoplasmic-facing. 2 helical membrane passes run 38-58 (TLYALVFITRYLDLLTFHWVS) and 59-79 (LYNALMKIFFIVSTAYIVVLL). The Cytoplasmic segment spans residues 80–98 (QGSKRTNTIAYNEMLMHDT). The helical transmembrane segment at 99 to 116 (FKIQHLLIGSALMSVFFH) threads the bilayer. Residues 117 to 118 (HK) lie on the Lumenal side of the membrane. The chain crosses the membrane as a helical span at residues 119-139 (FTFLELAWSFSVWLESVAILP). Over 140–152 (QLYMLSKGGKTRS) the chain is Cytoplasmic. The chain crosses the membrane as a helical span at residues 153 to 173 (LTVHYIFAMGLYRALYIPNWI). Topologically, residues 174 to 185 (WRYSTEDKKLDK) are lumenal. Residues 186-206 (IAFFAGLLQTLLYSDFFYIYY) traverse the membrane as a helical segment. Topologically, residues 207–219 (TKVIRGKGFKLPK) are cytoplasmic.

It belongs to the ERD2 family.

Its subcellular location is the endoplasmic reticulum membrane. Functionally, required for the retention of luminal endoplasmic reticulum proteins. Determines the specificity of the luminal ER protein retention system. Also required for normal vesicular traffic through the Golgi. This receptor strongly recognizes H-D-E-L and weakly recognizes D-D-E-L and K-D-E-L. The protein is ER lumen protein-retaining receptor of Saccharomyces cerevisiae (strain ATCC 204508 / S288c) (Baker's yeast).